The following is a 376-amino-acid chain: Succinyl-diaminopimelate desuccinylase (376 aa).

Position 66 (His66) interacts with Zn(2+). Asp68 is an active-site residue. Asp99 contacts Zn(2+). Glu133 (proton acceptor) is an active-site residue. Glu134, Glu162, and His349 together coordinate Zn(2+).

The protein belongs to the peptidase M20A family. DapE subfamily. Homodimer. Requires Zn(2+) as cofactor. Co(2+) serves as cofactor.

The enzyme catalyses N-succinyl-(2S,6S)-2,6-diaminopimelate + H2O = (2S,6S)-2,6-diaminopimelate + succinate. Its pathway is amino-acid biosynthesis; L-lysine biosynthesis via DAP pathway; LL-2,6-diaminopimelate from (S)-tetrahydrodipicolinate (succinylase route): step 3/3. Its function is as follows. Catalyzes the hydrolysis of N-succinyl-L,L-diaminopimelic acid (SDAP), forming succinate and LL-2,6-diaminopimelate (DAP), an intermediate involved in the bacterial biosynthesis of lysine and meso-diaminopimelic acid, an essential component of bacterial cell walls. The polypeptide is Succinyl-diaminopimelate desuccinylase (Buchnera aphidicola subsp. Cinara cedri (strain Cc)).